The sequence spans 254 residues: Ribonuclease PH (254 aa).

Residues arginine 86 and 124–126 (GTR) contribute to the phosphate site.

It belongs to the RNase PH family. As to quaternary structure, homohexameric ring arranged as a trimer of dimers.

It carries out the reaction tRNA(n+1) + phosphate = tRNA(n) + a ribonucleoside 5'-diphosphate. Phosphorolytic 3'-5' exoribonuclease that plays an important role in tRNA 3'-end maturation. Removes nucleotide residues following the 3'-CCA terminus of tRNAs; can also add nucleotides to the ends of RNA molecules by using nucleoside diphosphates as substrates, but this may not be physiologically important. Probably plays a role in initiation of 16S rRNA degradation (leading to ribosome degradation) during starvation. The protein is Ribonuclease PH of Carboxydothermus hydrogenoformans (strain ATCC BAA-161 / DSM 6008 / Z-2901).